The primary structure comprises 59 residues: Large ribosomal subunit protein uL30 (59 aa).

Belongs to the universal ribosomal protein uL30 family. In terms of assembly, part of the 50S ribosomal subunit.

The sequence is that of Large ribosomal subunit protein uL30 from Leptospira interrogans serogroup Icterohaemorrhagiae serovar copenhageni (strain Fiocruz L1-130).